A 390-amino-acid polypeptide reads, in one-letter code: Delta-aminolevulinic acid dehydratase, chloroplastic (390 aa).

A chloroplast-targeting transit peptide spans 1–24 (MQMMQRNVVGQRPVAGSRRSLVVA). A disordered region spans residues 34-69 (VSTNGKHRTGVPEGTPIVTPQDLPSRPRRNRRSESF). K251 acts as the Schiff-base intermediate with substrate in catalysis. 5-aminolevulinate contacts are provided by R261 and K281. E297 contacts Mg(2+). Residue K312 is the Schiff-base intermediate with substrate of the active site. 2 residues coordinate 5-aminolevulinate: S338 and Y377.

It belongs to the ALAD family. As to quaternary structure, homooctamer. It depends on Mg(2+) as a cofactor.

The protein resides in the plastid. The protein localises to the chloroplast. It carries out the reaction 2 5-aminolevulinate = porphobilinogen + 2 H2O + H(+). The protein operates within porphyrin-containing compound metabolism; protoporphyrin-IX biosynthesis; coproporphyrinogen-III from 5-aminolevulinate: step 1/4. In terms of biological role, catalyzes an early step in the biosynthesis of tetrapyrroles. Binds two molecules of 5-aminolevulinate per subunit, each at a distinct site, and catalyzes their condensation to form porphobilinogen. In Chlamydomonas reinhardtii (Chlamydomonas smithii), this protein is Delta-aminolevulinic acid dehydratase, chloroplastic (HEMB).